A 295-amino-acid chain; its full sequence is Ethanolamine ammonia-lyase small subunit (295 aa).

The adenosylcob(III)alamin site is built by V207, E228, and C258.

This sequence belongs to the EutC family. In terms of assembly, the basic unit is a heterodimer which dimerizes to form tetramers. The heterotetramers trimerize; 6 large subunits form a core ring with 6 small subunits projecting outwards. Requires adenosylcob(III)alamin as cofactor.

The protein resides in the bacterial microcompartment. It carries out the reaction ethanolamine = acetaldehyde + NH4(+). It functions in the pathway amine and polyamine degradation; ethanolamine degradation. Functionally, catalyzes the deamination of various vicinal amino-alcohols to oxo compounds. Allows this organism to utilize ethanolamine as the sole source of nitrogen and carbon in the presence of external vitamin B12. The polypeptide is Ethanolamine ammonia-lyase small subunit (Shigella sonnei (strain Ss046)).